The primary structure comprises 290 residues: Protease HtpX homolog (290 aa).

2 consecutive transmembrane segments (helical) span residues 4 to 24 (ILLF…VASL) and 39 to 59 (TALL…SLLI). Histidine 144 lines the Zn(2+) pocket. Glutamate 145 is an active-site residue. Position 148 (histidine 148) interacts with Zn(2+). Transmembrane regions (helical) follow at residues 159 to 179 (LIQG…GYAV) and 199 to 219 (VSTI…VAWF). Position 224 (glutamate 224) interacts with Zn(2+).

The protein belongs to the peptidase M48B family. Zn(2+) serves as cofactor.

It is found in the cell inner membrane. In Variovorax paradoxus (strain S110), this protein is Protease HtpX homolog.